Consider the following 348-residue polypeptide: MSGWSHRHILDLASFSLEDYSSVLELAHRFRSMPVTGARKLPALQGRLVATLFFEPSTRTRSSFELAARRLSADVQSFTPASSSLSKGETVLDTARTYVAMGADVLVVRHSSTSVPEQLACALDRSGERTAVLNGGDGLHSHPSQGLLDLYTLAHYFDSQNPLPEALQGKRIVIVGDVLHSRVARSNLWALTACGADVVLCGPPSLVPQDFVAFVEAPPPGQSHDPVQHRGCVEVVRTLEEALPGADAVMTLRLQKERMHQHLLTDLNRFHRDYGLTHERLKLCGKPVPLLHPGPVNRGVELGGSLLDDHSISLVEEQVRNGIPIRMALLYLMAAVESSSDPSLAAIG.

Residues Arg59 and Thr60 each coordinate carbamoyl phosphate. Lys87 lines the L-aspartate pocket. Arg109, His142, and Gln145 together coordinate carbamoyl phosphate. Positions 182 and 253 each coordinate L-aspartate. The carbamoyl phosphate site is built by Gly294 and Pro295.

It belongs to the aspartate/ornithine carbamoyltransferase superfamily. ATCase family. Heterododecamer (2C3:3R2) of six catalytic PyrB chains organized as two trimers (C3), and six regulatory PyrI chains organized as three dimers (R2).

The catalysed reaction is carbamoyl phosphate + L-aspartate = N-carbamoyl-L-aspartate + phosphate + H(+). It participates in pyrimidine metabolism; UMP biosynthesis via de novo pathway; (S)-dihydroorotate from bicarbonate: step 2/3. Catalyzes the condensation of carbamoyl phosphate and aspartate to form carbamoyl aspartate and inorganic phosphate, the committed step in the de novo pyrimidine nucleotide biosynthesis pathway. This chain is Aspartate carbamoyltransferase catalytic subunit, found in Prochlorococcus marinus (strain MIT 9303).